Here is a 364-residue protein sequence, read N- to C-terminus: Protein leg1a (364 aa).

Positions 1–22 are cleaved as a signal peptide; it reads MSEMGFLRSVAAVLLLAVFSHA. Asn70 is a glycosylation site (N-linked (GlcNAc...) asparagine).

Belongs to the LEG1 family. Detected in all tissues tested, with the highest levels in serum (at protein level). At mRNA level, only expressed in liver.

The protein localises to the secreted. Its function is as follows. Important for early development of liver, exocrine pancreas and intestine, probably through cell cycle regulation. In liver, its function is partially redundant with leg1b function. The polypeptide is Protein leg1a (Danio rerio (Zebrafish)).